The primary structure comprises 522 residues: Circadian clock oscillator protein KaiC (522 aa).

2 consecutive KaiC domains span residues 1–248 and 262–522; these read MKKS…INIF and ARVS…DDLL. Residues glycine 50, threonine 51, glycine 52, lysine 53, threonine 54, serine 90, lysine 225, leucine 226, arginine 227, threonine 229, histidine 231, threonine 241, aspartate 242, threonine 291, glycine 292, threonine 293, glycine 294, lysine 295, threonine 296, and leucine 297 each coordinate ATP. A Mg(2+)-binding site is contributed by threonine 54. Threonine 296 provides a ligand contact to Mg(2+). Residue glutamate 319 participates in Mg(2+) binding. Tryptophan 332 is an ATP binding site. Position 432 is a phosphoserine; by autocatalysis (serine 432). Phosphothreonine; by autocatalysis is present on threonine 433. ATP is bound by residues arginine 452, lysine 458, methionine 459, arginine 460, serine 462, histidine 464, and lysine 466.

It belongs to the KaiC family. In terms of assembly, homohexamer; hexamerization is dependent on ATP-binding. The KaiABC complex composition changes during the circadian cycle to control KaiC phosphorylation. Complexes KaiC(6), KaiA(2-4):KaiC(6), KaiB(6):KaiC(6) and KaiC(6):KaiB(6):KaiA(12) are among the most important forms, many form cooperatively. KaiC interacts with SasA, activating its autokinase function and leading to RpaA activation. Mg(2+) is required as a cofactor. Phosphorylated on serine and threonine residues by autocatalysis. Has a 4 step phosphorylation cycle; the autokinase acts first on Thr-433, then Ser-432. When Ser-432 is modified KaiC switches to an autophosphatase mode, acting first on phospho-Thr-433 then phospho-Ser-432.

The catalysed reaction is L-seryl-[protein] + ATP = O-phospho-L-seryl-[protein] + ADP + H(+). It catalyses the reaction L-threonyl-[protein] + ATP = O-phospho-L-threonyl-[protein] + ADP + H(+). The enzyme catalyses ATP + H2O = ADP + phosphate + H(+). The interaction with KaiA enhances its phosphorylation status, while the interaction with KaiB decreases it. In terms of biological role, central component of the KaiABC oscillator complex, which constitutes the main circadian regulator in cyanobacteria. Complex composition changes during the circadian cycle to control KaiC phosphorylation. KaiA stimulates KaiC autophosphorylation, while KaiB sequesters KaiA, leading to KaiC autodephosphorylation. Clock output pathways impact the RpaA transcriptional regulator. KaiC enhances the autophosphorylation activity of SasA, which then transfers its phosphate group to RpaA to activate it. KaiB and KaiC together enhance the phospho-RpaA dephosphatase activity of CikA. Its function is as follows. Has a weak, temperature-independent ATPase activity; ATPase activity defines the circadian period. The phosphorylation state of KaiC modulates its ATPase activity and effects KaiB binding. The sequence is that of Circadian clock oscillator protein KaiC from Acaryochloris marina (strain MBIC 11017).